The following is a 637-amino-acid chain: tRNA uridine 5-carboxymethylaminomethyl modification enzyme MnmG (637 aa).

FAD contacts are provided by residues 15–20, Val-127, and Ser-182; that span reads GAGHAG. 274–288 contributes to the NAD(+) binding site; sequence GPRYCPSIEDKVVRF. Gln-371 provides a ligand contact to FAD.

The protein belongs to the MnmG family. In terms of assembly, homodimer. Heterotetramer of two MnmE and two MnmG subunits. Requires FAD as cofactor.

Its subcellular location is the cytoplasm. NAD-binding protein involved in the addition of a carboxymethylaminomethyl (cmnm) group at the wobble position (U34) of certain tRNAs, forming tRNA-cmnm(5)s(2)U34. The sequence is that of tRNA uridine 5-carboxymethylaminomethyl modification enzyme MnmG from Heliobacterium modesticaldum (strain ATCC 51547 / Ice1).